A 217-amino-acid polypeptide reads, in one-letter code: GRB2-related adapter protein (217 aa).

An SH3 1 domain is found at 1–58 (MESVALYSFQATESDELAFNKGDTLKILNMEDDQNWYKAELRGAEGFVPKNYIRVKPH). The region spanning 60-152 (WYSGRISRQL…RRQIFLCDEQ (93 aa)) is the SH2 domain. The SH3 2 domain occupies 158 to 217 (SRACFAQAQFDFSAQDPSQLSLRRGDIVEVVEREDPHWWRGRAGGRLGFFPRSYVQPVHL).

Belongs to the GRB2/sem-5/DRK family. In terms of assembly, associates through its SH2 domain with ligand-activated receptors for stem cell factor (KIT) and erythropoietin (EPOR). Also forms a stable complex with the Bcr-Abl oncoprotein. GRAP is associated with the Ras guanine nucleotide exchange factor SOS1, primarily through its N-terminal SH3 domain. Interacts with phosphorylated LAT upon TCR activation. Interacts with SHB. In terms of tissue distribution, expressed in inner ear, in neruonal fibers innervating cochlear and utricular auditory hair cells (at protein level).

Its subcellular location is the membrane. It is found in the synapse. In terms of biological role, couples signals from receptor and cytoplasmic tyrosine kinases to the Ras signaling pathway. Plays a role in the inner ear and in hearing. This is GRB2-related adapter protein from Mus musculus (Mouse).